The chain runs to 257 residues: Deoxyribose-phosphate aldolase (257 aa).

The active-site Proton donor/acceptor is the Asp-102. Lys-166 functions as the Schiff-base intermediate with acetaldehyde in the catalytic mechanism. The active-site Proton donor/acceptor is the Lys-198.

It belongs to the DeoC/FbaB aldolase family. DeoC type 2 subfamily.

The protein resides in the cytoplasm. It carries out the reaction 2-deoxy-D-ribose 5-phosphate = D-glyceraldehyde 3-phosphate + acetaldehyde. The protein operates within carbohydrate degradation; 2-deoxy-D-ribose 1-phosphate degradation; D-glyceraldehyde 3-phosphate and acetaldehyde from 2-deoxy-alpha-D-ribose 1-phosphate: step 2/2. In terms of biological role, catalyzes a reversible aldol reaction between acetaldehyde and D-glyceraldehyde 3-phosphate to generate 2-deoxy-D-ribose 5-phosphate. The protein is Deoxyribose-phosphate aldolase of Shewanella sediminis (strain HAW-EB3).